Here is a 305-residue protein sequence, read N- to C-terminus: UDP-N-acetylenolpyruvoylglucosamine reductase 2 (305 aa).

The FAD-binding PCMH-type domain occupies 33–197; sequence VGGKADVFVA…LEARFELEEG (165 aa). Arg176 is a catalytic residue. Ser226 acts as the Proton donor in catalysis. Glu296 is a catalytic residue.

It belongs to the MurB family. The cofactor is FAD.

The protein resides in the cytoplasm. It catalyses the reaction UDP-N-acetyl-alpha-D-muramate + NADP(+) = UDP-N-acetyl-3-O-(1-carboxyvinyl)-alpha-D-glucosamine + NADPH + H(+). The protein operates within cell wall biogenesis; peptidoglycan biosynthesis. Functionally, cell wall formation. The protein is UDP-N-acetylenolpyruvoylglucosamine reductase 2 of Bacillus thuringiensis subsp. konkukian (strain 97-27).